The primary structure comprises 89 residues: Small ribosomal subunit protein uS14B (89 aa).

The disordered stretch occupies residues 38-61; it reads KLPKDAHPSRLKLRDQTDGRPRGY. Basic and acidic residues predominate over residues 39–58; that stretch reads LPKDAHPSRLKLRDQTDGRP.

It belongs to the universal ribosomal protein uS14 family. Part of the 30S ribosomal subunit. Contacts proteins S3 and S10.

Functionally, binds 16S rRNA, required for the assembly of 30S particles and may also be responsible for determining the conformation of the 16S rRNA at the A site. The polypeptide is Small ribosomal subunit protein uS14B (Enterococcus faecalis (strain ATCC 700802 / V583)).